The sequence spans 334 residues: MFGSFNSLKNAWAQVFPQAPDFTESSIPDLLGKVYIVTGANSGLGKELSGILYSKNAKVYVAARSEAKAQAAIEFIKAAHPHSKGDLVYLQIDLADLSAIKSSVNAFLSQEARLDVLFNNAGVLAPHDAPKTAQGYELNLGTNTIGTFLLTKLLLPTLLNTAKSSPKDSVRVIWVSSIAVNFSEQGGLDMENLDYHEDKSAVTKYAVSKVGNFLHSVELARRHGANADGVVSVALNPGNLDTELGRDRSWLETKILRTFVLYPPVFGAYTELFAGLSDQITAEMVRDNNWIGPWGRFCRIREDIDQAARPRSEGGHGLAERFWRWTEEQVKPYV.

Positions 44, 68, 93, 120, and 152 each coordinate NADP(+). Active-site proton donor residues include Ser176 and Tyr205. NADP(+)-binding residues include Tyr205, Lys209, and Asn239. Lys209 (lowers pKa of active site Tyr) is an active-site residue.

The protein belongs to the short-chain dehydrogenases/reductases (SDR) family.

It participates in mycotoxin biosynthesis. Its function is as follows. Short-chain dehydrogenase/reductase; part of the 2 gene clusters that mediate the biosynthesis of fusicoccins, diterpene glucosides that display phytohormone-like activity and function as potent activators of plasma membrane H(+)-ATPases in plants by modifying 14-3-3 proteins and cause the plant disease constriction canker. The first step in the pathway is performed by the fusicoccadiene synthase PaFS that possesses both prenyl transferase and terpene cyclase activity, converting isopentenyl diphosphate and dimethylallyl diphosphate into geranylgeranyl diphosphate (GGDP) and successively converting GGDP into fusicocca-2,10(14)-diene, a precursor for fusicoccin H. The second step is the oxidation at the C-8 position by the cytochrome P450 monooxygenase PaP450-2 to yield fusicocca-2,10(14)-diene-8-beta-ol. The cytochrome P450 monooxygenase PaP450-1 then catalyzes the hydroxylation at the C-16 position to produce fusicocca-2,10(14)-diene-8-beta,16-diol. The dioxygenase fc-dox then catalyzes the 16-oxydation of fusicocca-2,10(14)-diene-8-beta,16-diol to yield an aldehyde (8-beta-hydroxyfusicocca-1,10(14)-dien-16-al). The short-chain dehydrogenase/reductase fc-sdr catalyzes the reduction of the aldehyde to yield fusicocca-1,10(14)-diene-8-beta,16-diol. The next step is the hydroxylation at C-9 performed by the cytochrome P450 monooxygenase PaP450-3 that leads to fusicoccin H aglycon which is glycosylated to fusicoccin H by the O-glycosyltransferase PaGT. Hydroxylation at C-12 by the cytochrome P450 monooxygenase PaP450-4 leads then to the production of fusicoccin Q and is followed by methylation by the O-methyltransferase PaMT to yield fusicoccin P. Fusicoccin P is further converted to fusicoccin J via prenylation by the O-glucose prenyltransferase PaPT. Cytochrome P450 monooxygenase PaP450-5 then performs hydroxylation at C-19 to yield dideacetyl-fusicoccin A which is acetylated to 3'-O-deacetyl-fusicoccin A by the O-acetyltransferase PaAT-2. Finally, a another acetylation by the O-acetyltransferase PaAT-1 yields fusicoccin A. This chain is Short-chain dehydrogenase/reductase, found in Phomopsis amygdali (Fusicoccum amygdali).